A 262-amino-acid chain; its full sequence is uncharacterized protein (262 aa).

It belongs to the BtpA family.

This is an uncharacterized protein from Pyrococcus furiosus (strain ATCC 43587 / DSM 3638 / JCM 8422 / Vc1).